A 63-amino-acid polypeptide reads, in one-letter code: Large ribosomal subunit protein bL35 (63 aa).

Residues 1–15 (MPKIKTHRGAAKRFK) show a composition bias toward basic residues. A disordered region spans residues 1-26 (MPKIKTHRGAAKRFKQTAGGKWKGSH).

This sequence belongs to the bacterial ribosomal protein bL35 family.

The sequence is that of Large ribosomal subunit protein bL35 from Pelotomaculum thermopropionicum (strain DSM 13744 / JCM 10971 / SI).